A 152-amino-acid chain; its full sequence is Ribosome maturation factor RimP (152 aa).

It belongs to the RimP family.

The protein resides in the cytoplasm. Required for maturation of 30S ribosomal subunits. This Idiomarina loihiensis (strain ATCC BAA-735 / DSM 15497 / L2-TR) protein is Ribosome maturation factor RimP.